The following is a 416-amino-acid chain: Gamma-glutamyl phosphate reductase (416 aa).

This sequence belongs to the gamma-glutamyl phosphate reductase family.

It is found in the cytoplasm. It carries out the reaction L-glutamate 5-semialdehyde + phosphate + NADP(+) = L-glutamyl 5-phosphate + NADPH + H(+). The protein operates within amino-acid biosynthesis; L-proline biosynthesis; L-glutamate 5-semialdehyde from L-glutamate: step 2/2. In terms of biological role, catalyzes the NADPH-dependent reduction of L-glutamate 5-phosphate into L-glutamate 5-semialdehyde and phosphate. The product spontaneously undergoes cyclization to form 1-pyrroline-5-carboxylate. This Salmonella typhi protein is Gamma-glutamyl phosphate reductase.